The following is a 134-amino-acid chain: Translation initiation factor 2 subunit beta (134 aa).

Belongs to the eIF-2-beta/eIF-5 family. Heterotrimer composed of an alpha, a beta and a gamma chain.

EIF-2 functions in the early steps of protein synthesis by forming a ternary complex with GTP and initiator tRNA. The polypeptide is Translation initiation factor 2 subunit beta (Pyrobaculum arsenaticum (strain DSM 13514 / JCM 11321 / PZ6)).